A 467-amino-acid chain; its full sequence is Zinc finger and BTB domain-containing protein 43 (467 aa).

Met-1 is modified (N-acetylmethionine). The BTB domain occupies 33–97 (CDVSIVVQGH…SYTGRLVMPA (65 aa)). 2 disordered regions span residues 134 to 153 (LNHG…GLVE) and 162 to 227 (HTDF…EFHY). The segment covering 140–149 (HQSPSSSNYN) has biased composition (polar residues). Composition is skewed to basic and acidic residues over residues 164–174 (DFPKAQELRDG) and 182–194 (KDEL…EHEY). Glycyl lysine isopeptide (Lys-Gly) (interchain with G-Cter in SUMO2) cross-links involve residues Lys-182, Lys-247, Lys-297, and Lys-358. The C2H2-type 1; atypical zinc-finger motif lies at 373 to 394 (YPCQCGKSFTHKSQRDRHMSMH). The C2H2-type 2 zinc finger occupies 400–422 (YGCSVCGKKFKMKHHLVGHMKIH). Thr-423 bears the Phosphothreonine mark. The C2H2-type 3; atypical zinc finger occupies 428-450 (YECNICAKRFMWRDSFHRHVTSC). A Glycyl lysine isopeptide (Lys-Gly) (interchain with G-Cter in SUMO2) cross-link involves residue Lys-458.

This sequence belongs to the krueppel C2H2-type zinc-finger protein family. In terms of assembly, interacts with BDP1.

It is found in the nucleus. Its function is as follows. May be involved in transcriptional regulation. This is Zinc finger and BTB domain-containing protein 43 (Zbtb43) from Mus musculus (Mouse).